Here is a 337-residue protein sequence, read N- to C-terminus: uncharacterized protein (337 aa).

Positions 42 to 66 are enriched in low complexity; that stretch reads SHSVSPSPSPSDFSSSSSSSSSSPS. The interval 42–68 is disordered; sequence SHSVSPSPSPSDFSSSSSSSSSSPSTF. The 176-residue stretch at 129-304 folds into the Exonuclease domain; the sequence is FLVIDLEGKV…DDTKNITRVV (176 aa). Aspartate 133, glutamate 135, and aspartate 234 together coordinate Mg(2+). Glutamate 135 functions as the Proton acceptor in the catalytic mechanism. Glutamate 135 provides a ligand contact to AMP. Histidine 291 serves as the catalytic Proton acceptor. Histidine 291 is an AMP binding site. Residue aspartate 296 participates in Mg(2+) binding.

This is an uncharacterized protein from Arabidopsis thaliana (Mouse-ear cress).